Consider the following 141-residue polypeptide: Large ribosomal subunit protein uL16 (141 aa).

Belongs to the universal ribosomal protein uL16 family. As to quaternary structure, part of the 50S ribosomal subunit.

In terms of biological role, binds 23S rRNA and is also seen to make contacts with the A and possibly P site tRNAs. The protein is Large ribosomal subunit protein uL16 of Petrotoga mobilis (strain DSM 10674 / SJ95).